Consider the following 495-residue polypeptide: Ubiquinone biosynthesis monooxygenase COQ6, mitochondrial (495 aa).

It belongs to the UbiH/COQ6 family. In terms of assembly, component of a multi-subunit COQ enzyme complex. FAD serves as cofactor.

Its subcellular location is the mitochondrion inner membrane. It carries out the reaction a 4-hydroxy-3-(all-trans-polyprenyl)benzoate + 2 reduced [2Fe-2S]-[ferredoxin] + O2 + 2 H(+) = a 3,4-dihydroxy-5-(all-trans-polyprenyl)benzoate + 2 oxidized [2Fe-2S]-[ferredoxin] + H2O. The catalysed reaction is a 2-methoxy-6-(all-trans-polyprenyl)phenol + 2 reduced [2Fe-2S]-[ferredoxin] + O2 + 2 H(+) = a 2-methoxy-6-(all-trans-polyprenyl)benzene-1,4-diol + 2 oxidized [2Fe-2S]-[ferredoxin] + H2O. It participates in cofactor biosynthesis; ubiquinone biosynthesis. Functionally, FAD-dependent monooxygenase required for two non-consecutive steps during ubiquinone biosynthesis. Required for the C5-ring hydroxylation during ubiquinone biosynthesis by catalyzing the hydroxylation of 4-hydroxy-3-(all-trans-polyprenyl)benzoic acid to 3,4-dihydroxy-5-(all-trans-polyprenyl)benzoic acid. Also acts downstream of coq4, for the C1-hydroxylation during ubiquinone biosynthesis by catalyzing the hydroxylation of 2-methoxy-6-(all-trans-polyprenyl)phenol to 2-methoxy-6-(all-trans-polyprenyl)benzene-1,4-diol. The electrons required for the hydroxylation reaction are funneled indirectly to coq6 from NADPH via a ferredoxin/ferredoxin reductase system. The polypeptide is Ubiquinone biosynthesis monooxygenase COQ6, mitochondrial (Dictyostelium discoideum (Social amoeba)).